Reading from the N-terminus, the 286-residue chain is Putative thiosulfate sulfurtransferase (286 aa).

A Rhodanese 1 domain is found at 27-134 (DDPAYRLVEV…WVDNDYPTTD (108 aa)). Glycyl lysine isopeptide (Lys-Gly) (interchain with G-Cter in SAMP2) cross-links involve residues Lys-162 and Lys-166. In terms of domain architecture, Rhodanese 2 spans 164–283 (VDKGLPLVDV…WGNLVGAPVE (120 aa)). The active-site Cysteine persulfide intermediate is the Cys-242. Position 247 (Arg-247) interacts with substrate.

It carries out the reaction thiosulfate + hydrogen cyanide = thiocyanate + sulfite + 2 H(+). In terms of biological role, may be a sulfotransferase involved in the formation of thiosulfate. This chain is Putative thiosulfate sulfurtransferase (tssA), found in Haloferax volcanii (strain ATCC 29605 / DSM 3757 / JCM 8879 / NBRC 14742 / NCIMB 2012 / VKM B-1768 / DS2) (Halobacterium volcanii).